The sequence spans 236 residues: Phosphoribosylaminoimidazole-succinocarboxamide synthase (236 aa).

This sequence belongs to the SAICAR synthetase family.

The enzyme catalyses 5-amino-1-(5-phospho-D-ribosyl)imidazole-4-carboxylate + L-aspartate + ATP = (2S)-2-[5-amino-1-(5-phospho-beta-D-ribosyl)imidazole-4-carboxamido]succinate + ADP + phosphate + 2 H(+). It functions in the pathway purine metabolism; IMP biosynthesis via de novo pathway; 5-amino-1-(5-phospho-D-ribosyl)imidazole-4-carboxamide from 5-amino-1-(5-phospho-D-ribosyl)imidazole-4-carboxylate: step 1/2. The protein is Phosphoribosylaminoimidazole-succinocarboxamide synthase of Streptococcus equi subsp. zooepidemicus (strain MGCS10565).